Reading from the N-terminus, the 761-residue chain is MNFSSIFKSISNFQFPYTIEETAITETALWQCFDGTRKADSLPVTVFKAKRSPENESLILNAVHKSKILKIPGLCTVLETFDSDPQSTFIVTERVVPFPWDNLGSLSQNKFGVELGISQLLATLGFLKNFVLGTLSKDSVFINIKGEWVLFGLELCSSKEGLSAFEFASRARSYYNIIGSQLPCEDPNTIDSMGLGLLIKSLMAPSCLPKDWIVNVNMISDGKITIENFRKRLENTETWRSNPLINFYQELRELHIKDPQGKLVVMSNLENLYLESREIFRNLTPGMIENFIIPELCEIIKLLMTQSISSAASPIGMNFNASHKLVPFLAIVLDLTSETNTFPVGFNDLITQSFKLPDRQVRFLLLIYLPKLIGPLSKSEISSRIYPHFIQGLTDSDATLRLQTLKTIPCIVSCLTERQLNNELLRFLAKTQVDSDVEIRTWTVIIISKISTILSTSVGNRSNILATAFTKSLKDPQVKPRLAALYGLEKSIELFDVNTIANKILTVIAPGLLDKSPIVRGRAKILFEEYLEKLEKEAQLIQTNDSTADSEDVKDIDFENYGCDEEDMNKEDNLLAAQFLNNLRLNSPSATTPSNITESEIDSAQDGSGWDDLSDTDGFITNGTTESFDETTNPVTTASTPKLFGKPIKINKSWNDELNDDGWIQDESGPSKVPQKHTRPQNSTLAKSIAPSSRLSIKKKKTTILAPRNIASNSTVTTKSSLSNKTARSKPISSIRGSVTKKGNVDGWDDDGDSDSWDTNW.

HEAT repeat units lie at residues 385–423 (IYPH…LNNE) and 498–534 (NTIA…LEKL). Disordered stretches follow at residues 660 to 692 (DDGW…IAPS) and 714 to 761 (STVT…DTNW). Polar residues-rich tracts occupy residues 680–692 (PQNS…IAPS) and 714–737 (STVT…SIRG). Residues 747–761 (GWDDDGDSDSWDTNW) show a composition bias toward acidic residues. A Phosphoserine modification is found at serine 754.

In terms of assembly, associates with the nuclear pore complex (NPC). Interacts with GSP1, LOS1, MSN5, NUP116 and TEF2.

Its subcellular location is the cytoplasm. Functionally, component of the nuclear tRNA export machinery that my collect tRNA from the nuclear tRNA export receptors of the aminoacylation-dependent export and may deliver aminoacylated tRNAs to the translation machinery pathway at the nuclear pore complex. This chain is Cytoplasmic export protein 1 (CEX1), found in Saccharomyces cerevisiae (strain ATCC 204508 / S288c) (Baker's yeast).